We begin with the raw amino-acid sequence, 103 residues long: Histone H4 (103 aa).

K6 carries the N6-acetyl-N6-methyllysine; alternate modification. 3 positions are modified to N6-methyllysine; alternate: K6, K9, and K13. Residue K13 is modified to N6-acetyl-N6-methyllysine; alternate. A DNA-binding region spans residues 17–21; the sequence is KRHRK. An N6-glutaryllysine modification is found at K92.

It belongs to the histone H4 family. As to quaternary structure, the nucleosome is a histone octamer containing two molecules each of H2A, H2B, H3 and H4 assembled in one H3-H4 heterotetramer and two H2A-H2B heterodimers. The octamer wraps approximately 147 bp of DNA. Post-translationally, glutarylation at Lys-92 (H4K91glu) destabilizes nucleosomes by promoting dissociation of the H2A-H2B dimers from nucleosomes.

Its subcellular location is the nucleus. It localises to the chromosome. In terms of biological role, core component of nucleosome. Nucleosomes wrap and compact DNA into chromatin, limiting DNA accessibility to the cellular machineries which require DNA as a template. Histones thereby play a central role in transcription regulation, DNA repair, DNA replication and chromosomal stability. DNA accessibility is regulated via a complex set of post-translational modifications of histones, also called histone code, and nucleosome remodeling. The polypeptide is Histone H4 (ahsb4) (Blastobotrys adeninivorans (Yeast)).